The sequence spans 307 residues: Nucleotide-binding protein Achl_1824 (307 aa).

Residue 30–37 participates in ATP binding; the sequence is GMSGAGRS. 81–84 provides a ligand contact to GTP; sequence DVRS.

The protein belongs to the RapZ-like family.

Functionally, displays ATPase and GTPase activities. The sequence is that of Nucleotide-binding protein Achl_1824 from Pseudarthrobacter chlorophenolicus (strain ATCC 700700 / DSM 12829 / CIP 107037 / JCM 12360 / KCTC 9906 / NCIMB 13794 / A6) (Arthrobacter chlorophenolicus).